The sequence spans 283 residues: Shikimate dehydrogenase (NADP(+)) (283 aa).

Residues 16–18 (SLS) and Thr63 contribute to the shikimate site. The active-site Proton acceptor is Lys67. Asp79 serves as a coordination point for NADP(+). 2 residues coordinate shikimate: Asn88 and Asp103. NADP(+) contacts are provided by residues 128-132 (GAGGA), Ala223, and Gly243.

It belongs to the shikimate dehydrogenase family. Homodimer.

It catalyses the reaction shikimate + NADP(+) = 3-dehydroshikimate + NADPH + H(+). Its pathway is metabolic intermediate biosynthesis; chorismate biosynthesis; chorismate from D-erythrose 4-phosphate and phosphoenolpyruvate: step 4/7. Its function is as follows. Involved in the biosynthesis of the chorismate, which leads to the biosynthesis of aromatic amino acids. Catalyzes the reversible NADPH linked reduction of 3-dehydroshikimate (DHSA) to yield shikimate (SA). The polypeptide is Shikimate dehydrogenase (NADP(+)) (Xanthomonas oryzae pv. oryzae (strain MAFF 311018)).